A 57-amino-acid chain; its full sequence is Large ribosomal subunit protein eL20 (57 aa).

The span at 1–10 (MSEFTVTGTF) shows a compositional bias: polar residues. The tract at residues 1–21 (MSEFTVTGTFESRDGNQPFEK) is disordered.

The protein belongs to the eukaryotic ribosomal protein eL20 family. In terms of assembly, part of the 50S ribosomal subunit. Binds 23S rRNA.

This is Large ribosomal subunit protein eL20 from Halomicrobium mukohataei (strain ATCC 700874 / DSM 12286 / JCM 9738 / NCIMB 13541) (Haloarcula mukohataei).